We begin with the raw amino-acid sequence, 765 residues long: Amine oxidase [copper-containing] 3 (765 aa).

Residues 1–6 (MTQKTT) are Cytoplasmic-facing. The chain crosses the membrane as a helical; Signal-anchor for type II membrane protein span at residues 7–27 (LVLLALAVITIFALVCVLLAG). The Extracellular segment spans residues 28–765 (RSGDGGGLSQ…SHGGFAYRDN (738 aa)). N137 carries N-linked (GlcNAc...) asparagine glycosylation. The cysteines at positions 198 and 199 are disulfide-linked. 2 N-linked (GlcNAc...) asparagine glycosylation sites follow: N232 and N294. The Proton acceptor role is filled by D386. Residues C404 and C430 are joined by a disulfide bond. Residue Y471 is the Schiff-base intermediate with substrate; via topaquinone of the active site. Y471 is modified (2',4',5'-topaquinone). Cu(2+) contacts are provided by H520 and H522. Positions 529, 530, 531, and 572 each coordinate Ca(2+). An N-linked (GlcNAc...) asparagine glycan is attached at N592. E641 provides a ligand contact to Ca(2+). An N-linked (GlcNAc...) asparagine glycan is attached at N659. F663 provides a ligand contact to Ca(2+). N666 carries an N-linked (GlcNAc...) asparagine glycan. Residues E667, D673, and L674 each coordinate Ca(2+). Residue H684 participates in Cu(2+) binding. A disulfide bridge connects residues C734 and C741.

The protein belongs to the copper/topaquinone oxidase family. Homodimer; disulfide-linked. Probably forms heterodimers with AOC2. Requires Cu(2+) as cofactor. Ca(2+) is required as a cofactor. L-topaquinone serves as cofactor. Topaquinone (TPQ) is generated by copper-dependent autoxidation of a specific tyrosyl residue. In terms of processing, N- and O-glycosylated.

The protein localises to the cell membrane. It catalyses the reaction methylamine + O2 + H2O = formaldehyde + H2O2 + NH4(+). The enzyme catalyses benzylamine + O2 + H2O = benzaldehyde + H2O2 + NH4(+). The catalysed reaction is 2-phenylethylamine + O2 + H2O = 2-phenylacetaldehyde + H2O2 + NH4(+). In terms of biological role, catalyzes the oxidative deamination of primary amines to the corresponding aldehydes with the concomitant production of hydrogen peroxide and ammonia. Has a preference for the primary monoamines methylamine and benzylamine. Could also act on 2-phenylethylamine but much less efficiently. At endothelial cells surface can also function as a cell adhesion protein that participates in lymphocyte extravasation and recirculation by mediating the binding of lymphocytes to peripheral lymph node vascular endothelial cells in an L-selectin-independent fashion. The sequence is that of Amine oxidase [copper-containing] 3 from Mus musculus (Mouse).